We begin with the raw amino-acid sequence, 210 residues long: Uracil phosphoribosyltransferase (210 aa).

Residues Arg-78, Arg-103, and 130–138 (DPMLATGGS) each bind 5-phospho-alpha-D-ribose 1-diphosphate. Uracil-binding positions include Ile-193 and 198–200 (GDA). Position 199 (Asp-199) interacts with 5-phospho-alpha-D-ribose 1-diphosphate.

This sequence belongs to the UPRTase family. The cofactor is Mg(2+).

The enzyme catalyses UMP + diphosphate = 5-phospho-alpha-D-ribose 1-diphosphate + uracil. It participates in pyrimidine metabolism; UMP biosynthesis via salvage pathway; UMP from uracil: step 1/1. With respect to regulation, allosterically activated by GTP. Functionally, catalyzes the conversion of uracil and 5-phospho-alpha-D-ribose 1-diphosphate (PRPP) to UMP and diphosphate. In Laribacter hongkongensis (strain HLHK9), this protein is Uracil phosphoribosyltransferase.